The primary structure comprises 571 residues: Polypeptide N-acetylgalactosaminyltransferase 2 (571 aa).

Topologically, residues 1–6 (MRRRSR) are cytoplasmic. The helical; Signal-anchor for type II membrane protein transmembrane segment at 7-24 (MLLCFAFLWVLGIAYYMY) threads the bilayer. Residues 25–571 (SGGGSALAGG…QWKFTLNLQQ (547 aa)) are Lumenal-facing. O-linked (Xyl...) (chondroitin sulfate) serine glycosylation is present at serine 29. Over residues 53–66 (KKDLHHSNGEEKAQ) the composition is skewed to basic and acidic residues. Residues 53–74 (KKDLHHSNGEEKAQSMETLPPG) are disordered. Intrachain disulfides connect cysteine 126/cysteine 354, cysteine 345/cysteine 423, cysteine 456/cysteine 473, and cysteine 496/cysteine 513. Positions 135–240 (LPATSVVITF…EHWLEPLLER (106 aa)) are catalytic subdomain A. Substrate-binding residues include threonine 143, aspartate 176, and arginine 201. Residue aspartate 224 coordinates Mn(2+). Serine 225 contributes to the substrate binding site. Residue histidine 226 participates in Mn(2+) binding. The catalytic subdomain B stretch occupies residues 300–362 (PIKTPMIAGG…PCSRVGHVFR (63 aa)). A substrate-binding site is contributed by tryptophan 331. Histidine 359 is a Mn(2+) binding site. Positions 362, 365, and 367 each coordinate substrate. One can recognise a Ricin B-type lectin domain in the interval 443 to 566 (QDIAFGALQQ…PALSQQWKFT (124 aa)). Serine 536 is modified (phosphoserine). Cysteines 539 and 555 form a disulfide.

It belongs to the glycosyltransferase 2 family. GalNAc-T subfamily. Mn(2+) serves as cofactor. In terms of tissue distribution, detected in urine (at protein level). Widely expressed.

It is found in the golgi apparatus. The protein resides in the golgi stack membrane. It localises to the secreted. The catalysed reaction is L-seryl-[protein] + UDP-N-acetyl-alpha-D-galactosamine = a 3-O-[N-acetyl-alpha-D-galactosaminyl]-L-seryl-[protein] + UDP + H(+). It catalyses the reaction L-threonyl-[protein] + UDP-N-acetyl-alpha-D-galactosamine = a 3-O-[N-acetyl-alpha-D-galactosaminyl]-L-threonyl-[protein] + UDP + H(+). It participates in protein modification; protein glycosylation. In terms of biological role, catalyzes the initial reaction in O-linked oligosaccharide biosynthesis, the transfer of an N-acetyl-D-galactosamine residue to a serine or threonine residue on the protein receptor. Has a broad spectrum of substrates for peptides such as EA2, Muc5AC, Muc1a, Muc1b. Probably involved in O-linked glycosylation of the immunoglobulin A1 (IgA1) hinge region. Involved in O-linked glycosylation of APOC-III, ANGPTL3 and PLTP. It participates in the regulation of HDL-C metabolism. This chain is Polypeptide N-acetylgalactosaminyltransferase 2 (GALNT2), found in Homo sapiens (Human).